Consider the following 111-residue polypeptide: Histone H2A-Bbd type 1 (111 aa).

This sequence belongs to the histone H2A family. The nucleosome is a histone octamer containing two molecules each of H2A, H2B, H3 and H4 assembled in one H3-H4 heterotetramer and two H2A-H2B heterodimers. Incorporated into nucleosomes during late spermatogenesis. Interacts with H2BC1/TH2B; preferentially dimerizes with H2BC1/TH2B to form nucleosomes. As to expression, highly expressed in adult testis, mainly in spermatocytes.

It localises to the nucleus. It is found in the chromosome. Its function is as follows. Atypical histone H2A which replaces conventional H2A during late spermatogenesis and is involved in the replacement of histones to protamine in male germ cells. Core component of nucleosome: nucleosomes wrap and compact DNA into chromatin, limiting DNA accessibility to the cellular machineries which require DNA as a template. Nucleosomes containing H2AB1 only wrap 130 bp of DNA, compared to 147 bp for classical nucleosomes. In condensing spermatids, the heterodimer between H2AB1 and H2BC1/TH2B is loaded onto the nucleosomes and promotes loading of transition proteins (TNP1 and TNP2) onto the nucleosomes. Inclusion of the H2AB1-H2BC1/TH2B dimer into chromatin opens the nucleosomes, releasing the nucleosomal DNA ends and allowing the invasion of nucleosomes by transition proteins (TNP1 and TNP2). Then, transition proteins drive the recruitment and processing of protamines, which are responsible for histone eviction. This chain is Histone H2A-Bbd type 1 (H2ab1), found in Mus musculus (Mouse).